The chain runs to 86 residues: Cell division topological specificity factor (86 aa).

The protein belongs to the MinE family.

Prevents the cell division inhibition by proteins MinC and MinD at internal division sites while permitting inhibition at polar sites. This ensures cell division at the proper site by restricting the formation of a division septum at the midpoint of the long axis of the cell. The polypeptide is Cell division topological specificity factor (Photobacterium profundum (strain SS9)).